The primary structure comprises 211 residues: Large ribosomal subunit protein uL3 (211 aa).

At Q150 the chain carries N5-methylglutamine.

The protein belongs to the universal ribosomal protein uL3 family. Part of the 50S ribosomal subunit. Forms a cluster with proteins L14 and L19. Methylated by PrmB.

In terms of biological role, one of the primary rRNA binding proteins, it binds directly near the 3'-end of the 23S rRNA, where it nucleates assembly of the 50S subunit. In Pseudomonas entomophila (strain L48), this protein is Large ribosomal subunit protein uL3.